We begin with the raw amino-acid sequence, 134 residues long: ATP synthase epsilon chain (134 aa).

Belongs to the ATPase epsilon chain family. As to quaternary structure, F-type ATPases have 2 components, CF(1) - the catalytic core - and CF(0) - the membrane proton channel. CF(1) has five subunits: alpha(3), beta(3), gamma(1), delta(1), epsilon(1). CF(0) has three main subunits: a, b and c.

The protein localises to the cell membrane. Produces ATP from ADP in the presence of a proton gradient across the membrane. In Anoxybacillus flavithermus (strain DSM 21510 / WK1), this protein is ATP synthase epsilon chain.